The chain runs to 295 residues: ATP synthase gamma chain (295 aa).

Belongs to the ATPase gamma chain family. F-type ATPases have 2 components, CF(1) - the catalytic core - and CF(0) - the membrane proton channel. CF(1) has five subunits: alpha(3), beta(3), gamma(1), delta(1), epsilon(1). CF(0) has three main subunits: a, b and c.

It localises to the cell inner membrane. Produces ATP from ADP in the presence of a proton gradient across the membrane. The gamma chain is believed to be important in regulating ATPase activity and the flow of protons through the CF(0) complex. This is ATP synthase gamma chain from Sulfurimonas denitrificans (strain ATCC 33889 / DSM 1251) (Thiomicrospira denitrificans (strain ATCC 33889 / DSM 1251)).